A 740-amino-acid polypeptide reads, in one-letter code: Zinc finger CCCH domain-containing protein 14 (740 aa).

4 disordered regions span residues 82 to 240 (SNKQ…NIKG), 254 to 314 (VSAG…DDAV), 390 to 426 (ITPS…DDEE), and 444 to 469 (SFRD…HHST). Composition is skewed to basic and acidic residues over residues 87 to 158 (ETSK…EIQR) and 176 to 185 (EHVRARGEKH). Over residues 186–200 (DRHHHKDHRRGRSHE) the composition is skewed to basic residues. Polar residues predominate over residues 204–214 (ITSTIVRQASA). The segment covering 393-409 (SRDSTPTDDSPTMQKWN) has biased composition (polar residues). Residues 414 to 426 (IGDDSEESEDDEE) are compositionally biased toward acidic residues. 2 C3H1-type zinc fingers span residues 499-522 (HVKE…MHPT) and 523-543 (TNCK…IHPP). The interval 623–661 (IKKKPAPGAESEKKEEKSDENESKAEEPKAEVAPVQPKP) is disordered. Residues 632-652 (ESEKKEEKSDENESKAEEPKA) show a composition bias toward basic and acidic residues. C3H1-type zinc fingers lie at residues 668-691 (LHSM…KHPK), 674-691 (CRYA…KHPK), and 693-709 (CRFG…FYHK).

This sequence belongs to the ZC3H14 family.

It localises to the nucleus. It is found in the cytoplasm. Its function is as follows. RNA-binding protein involved in the biogenesis of circular RNAs (circRNAs), which are produced by back-splicing circularization of pre-mRNAs. The sequence is that of Zinc finger CCCH domain-containing protein 14 (sut-2) from Caenorhabditis elegans.